Here is a 152-residue protein sequence, read N- to C-terminus: Chemokine-like factor (152 aa).

An MARVEL domain is found at 13–133; it reads FCFSVKGHVK…DGALIYRKLL (121 aa). Helical transmembrane passes span 45–65, 81–101, and 108–128; these read YIVITGFEVTVILFFILLYVL, IINSLVTTVFMLIVSVLALIP, and VGGGVFALVTAVCCLADGALI.

Belongs to the chemokine-like factor family. In terms of tissue distribution, isoform 1, isoform 2, isoform 3 and isoform 4 have highest expression levels in adult spleen, lung, testis, ovary, peripheral blood leukocyte, placenta, pancreas, and in fetal brain, skeletal muscle, thymus and heart. Lower expression levels in adult skeletal muscle, liver, thymus colon, prostate and fetal spleen and liver.

Its subcellular location is the secreted. The protein resides in the membrane. With respect to regulation, partly inhibited by interleukin 10. Its function is as follows. May play an important role in inflammation and regeneration of skeletal muscle. Essential for embryonic development. Functionally, has chemotactic response in monocytes, neutrophils and lymphocytes. Binds CCR4. The protein is Chemokine-like factor (CKLF) of Homo sapiens (Human).